The sequence spans 267 residues: Putative ABC transporter permease protein MJ0413 (267 aa).

7 consecutive transmembrane segments (helical) span residues 18–38 (VLKI…AIYI), 48–68 (EAVI…GSLI), 78–98 (VISG…LMGY), 115–135 (PIPP…GEMS), 136–156 (MIFI…ISGV), 188–208 (PSIL…VVAA), and 228–248 (LSRM…GLVL). Residues 71–252 (TIISIKRVIS…LIGLVLDRGL (182 aa)) enclose the ABC transmembrane type-1 domain.

It belongs to the binding-protein-dependent transport system permease family. CysTW subfamily.

Its subcellular location is the cell membrane. Functionally, probably part of a binding-protein-dependent transport system. Probably responsible for the translocation of the substrate across the membrane. The chain is Putative ABC transporter permease protein MJ0413 from Methanocaldococcus jannaschii (strain ATCC 43067 / DSM 2661 / JAL-1 / JCM 10045 / NBRC 100440) (Methanococcus jannaschii).